We begin with the raw amino-acid sequence, 647 residues long: ATP-dependent zinc metalloprotease FtsH (647 aa).

The segment at 1 to 33 (MARKSDEDTNPMDKFMDRLRGSPGDGGPGRPDP) is disordered. Residues 1 to 39 (MARKSDEDTNPMDKFMDRLRGSPGDGGPGRPDPSQRKVH) are Cytoplasmic-facing. A helical membrane pass occupies residues 40-60 (FSIWYFILALLLIVWMQTYMG). The Periplasmic segment spans residues 61-134 (EQQSEKISYS…RFSGDVQNPW (74 aa)). Residues 135-155 (LGLITWWLLPFAIMIFFWSFL) traverse the membrane as a helical segment. At 156–647 (MRRMGGGPQG…DPVQVEGGAA (492 aa)) the chain is on the cytoplasmic side. Position 227 to 234 (227 to 234 (GAPGTGKT)) interacts with ATP. Histidine 449 contacts Zn(2+). Glutamate 450 is an active-site residue. Zn(2+) is bound by residues histidine 453 and aspartate 526.

This sequence in the central section; belongs to the AAA ATPase family. In the C-terminal section; belongs to the peptidase M41 family. As to quaternary structure, homohexamer. It depends on Zn(2+) as a cofactor.

The protein resides in the cell inner membrane. Acts as a processive, ATP-dependent zinc metallopeptidase for both cytoplasmic and membrane proteins. Plays a role in the quality control of integral membrane proteins. The sequence is that of ATP-dependent zinc metalloprotease FtsH from Syntrophobacter fumaroxidans (strain DSM 10017 / MPOB).